We begin with the raw amino-acid sequence, 292 residues long: Proteasome subunit beta 2 (292 aa).

Residues 1 to 59 constitute a propeptide, removed in mature form; by autocatalysis; the sequence is MTVDRAPRITDGDTRLSFGSNLSSFSEYLRVHAPEHLPQNRFADTGGVVMGGGDVAPHG. Thr-60 acts as the Nucleophile in catalysis.

The protein belongs to the peptidase T1B family. The 20S proteasome core is composed of 14 alpha and 14 beta subunits that assemble into four stacked heptameric rings, resulting in a barrel-shaped structure. The two inner rings, each composed of seven catalytic beta subunits, are sandwiched by two outer rings, each composed of seven alpha subunits. All four combinations of alpha- and beta-subunits (beta2-alpha1, beta2-alpha2, beta1-alpha2 and beta1-alpha1) yield fully assembled and proteolytically active proteasomes. The catalytic chamber with the active sites is on the inside of the barrel. Has probably a gated structure, the ends of the cylinder being occluded by the N-termini of the alpha-subunits. Is likely capped by the proteasome-associated ATPase, ARC.

Its subcellular location is the cytoplasm. It carries out the reaction Cleavage of peptide bonds with very broad specificity.. It functions in the pathway protein degradation; proteasomal Pup-dependent pathway. With respect to regulation, the formation of the proteasomal ATPase ARC-20S proteasome complex, likely via the docking of the C-termini of ARC into the intersubunit pockets in the alpha-rings, may trigger opening of the gate for substrate entry. Interconversion between the open-gate and close-gate conformations leads to a dynamic regulation of the 20S proteasome proteolysis activity. Its function is as follows. Component of the proteasome core, a large protease complex with broad specificity involved in protein degradation. The R.erythropolis proteasomes are able to cleave oligopeptides after Tyr, Phe and Leu, very poorly after Arg but not after Glu. Thus, displays chymotrypsin-like activity, low trypsin-like activity but no caspase-like activity. In Rhodococcus erythropolis (Arthrobacter picolinophilus), this protein is Proteasome subunit beta 2.